Reading from the N-terminus, the 257-residue chain is UPF0246 protein ASA_3634 (257 aa).

The protein belongs to the UPF0246 family.

The chain is UPF0246 protein ASA_3634 from Aeromonas salmonicida (strain A449).